The primary structure comprises 236 residues: Ubiquinone biosynthesis O-methyltransferase (236 aa).

S-adenosyl-L-methionine-binding residues include R36, G60, D81, and L123.

The protein belongs to the methyltransferase superfamily. UbiG/COQ3 family.

It carries out the reaction a 3-demethylubiquinol + S-adenosyl-L-methionine = a ubiquinol + S-adenosyl-L-homocysteine + H(+). It catalyses the reaction a 3-(all-trans-polyprenyl)benzene-1,2-diol + S-adenosyl-L-methionine = a 2-methoxy-6-(all-trans-polyprenyl)phenol + S-adenosyl-L-homocysteine + H(+). It functions in the pathway cofactor biosynthesis; ubiquinone biosynthesis. Functionally, O-methyltransferase that catalyzes the 2 O-methylation steps in the ubiquinone biosynthetic pathway. This is Ubiquinone biosynthesis O-methyltransferase from Rickettsia canadensis (strain McKiel).